Reading from the N-terminus, the 453-residue chain is Probable glycine dehydrogenase (decarboxylating) subunit 1 (453 aa).

Belongs to the GcvP family. N-terminal subunit subfamily. In terms of assembly, the glycine cleavage system is composed of four proteins: P, T, L and H. In this organism, the P 'protein' is a heterodimer of two subunits.

It catalyses the reaction N(6)-[(R)-lipoyl]-L-lysyl-[glycine-cleavage complex H protein] + glycine + H(+) = N(6)-[(R)-S(8)-aminomethyldihydrolipoyl]-L-lysyl-[glycine-cleavage complex H protein] + CO2. Functionally, the glycine cleavage system catalyzes the degradation of glycine. The P protein binds the alpha-amino group of glycine through its pyridoxal phosphate cofactor; CO(2) is released and the remaining methylamine moiety is then transferred to the lipoamide cofactor of the H protein. This is Probable glycine dehydrogenase (decarboxylating) subunit 1 from Methylococcus capsulatus (strain ATCC 33009 / NCIMB 11132 / Bath).